An 856-amino-acid chain; its full sequence is DNA mismatch repair protein MutS (856 aa).

600-607 (GPNMSGKS) is a binding site for ATP.

It belongs to the DNA mismatch repair MutS family.

In terms of biological role, this protein is involved in the repair of mismatches in DNA. It is possible that it carries out the mismatch recognition step. This protein has a weak ATPase activity. This chain is DNA mismatch repair protein MutS, found in Lactobacillus acidophilus (strain ATCC 700396 / NCK56 / N2 / NCFM).